A 32-amino-acid polypeptide reads, in one-letter code: Trypsin inhibitor 3 (32 aa).

3 disulfide bridges follow: C6–C23, C13–C25, and C19–C31.

Belongs to the protease inhibitor I7 (squash-type serine protease inhibitor) family.

Its subcellular location is the secreted. Functionally, inhibits trypsin. The sequence is that of Trypsin inhibitor 3 from Cucurbita pepo (Vegetable marrow).